Consider the following 578-residue polypeptide: CTP synthase (578 aa).

A Glutamine amidotransferase type-1 domain is found at 305-559; sequence KIALVGKYTN…LGLVAASSGI (255 aa). Catalysis depends on for GATase activity residues Cys-404, His-535, and Glu-537.

It belongs to the CTP synthase family.

It carries out the reaction UTP + L-glutamine + ATP + H2O = CTP + L-glutamate + ADP + phosphate + 2 H(+). The protein operates within pyrimidine metabolism; CTP biosynthesis via de novo pathway; CTP from UDP: step 2/2. Catalyzes the ATP-dependent amination of UTP to CTP with either L-glutamine or ammonia as the source of nitrogen. This is CTP synthase (URA7) from Candida glabrata (strain ATCC 2001 / BCRC 20586 / JCM 3761 / NBRC 0622 / NRRL Y-65 / CBS 138) (Yeast).